The primary structure comprises 31 residues: Cytolysin Oshem 2 (31 aa).

It is found in the secreted. It localises to the nematocyst. The protein resides in the target cell membrane. Cytolysin that shows weak hemolysis and weak myonecrosis. This chain is Cytolysin Oshem 2, found in Olindias sambaquiensis (Hydromedusa).